Consider the following 254-residue polypeptide: Allene oxide cyclase 1, chloroplastic (254 aa).

The transit peptide at 1 to 78 directs the protein to the chloroplast; that stretch reads MASSTISLQS…QNLGNTENPR (78 aa). A compositionally biased stretch (low complexity) spans 44-56; it reads SNGPGSSSPTSFT. A disordered region spans residues 44–79; the sequence is SNGPGSSSPTSFTPKKKLTPTRALSQNLGNTENPRP. The span at 65–77 shows a compositional bias: polar residues; that stretch reads RALSQNLGNTENP.

This sequence belongs to the allene oxide cyclase family. Highly expressed in fully developed leaves.

It is found in the plastid. The protein localises to the chloroplast. It carries out the reaction (9Z,13S,15Z)-12,13-epoxyoctadeca-9,11,15-trienoate = (9S,13S,15Z)-12-oxophyto-10,15-dienoate. Involved in the production of 12-oxo-phytodienoic acid (OPDA), a precursor of jasmonic acid. This chain is Allene oxide cyclase 1, chloroplastic (AOC1), found in Arabidopsis thaliana (Mouse-ear cress).